The following is a 346-amino-acid chain: MLWITRFAGLFSAAMAVIVLSPSLQSFPPAAAIRSSPSPIFRKAPAVFNNGDECLSSGGVCNPSLVHVAITLDVEYLRGSIAAVNSILQHSVCPESVFFHFIAVSEETNLLESLVRSVFPRLKFNIYDFAPETVRGLISSSVRQALEQPLNYARSYLADLLEPCVNRVIYLDSDLVVVDDIAKLWKTSLGSRIIGAPEYCHANFTKYFTGGFWSEERFSGTFRGRKPCYFNTGVMVIDLKKWRRGGYTKRIEKWMEIQRRERIYELGSLPPFLLVFSGHVAPISHRWNQHGLGGDNVRGSCRDLHPGPVSLLHWSGSGKPWIRLDSKRPCPLDALWTPYDLYRHSH.

Residues Met-1–Ser-21 form a helical; Signal-anchor for type II membrane protein membrane-spanning segment. The Lumenal segment spans residues Pro-22–His-346. An N-linked (GlcNAc...) asparagine glycan is attached at Asn-203.

The protein belongs to the glycosyltransferase 8 family.

It is found in the golgi apparatus membrane. It functions in the pathway glycan metabolism; pectin biosynthesis. May be involved in pectin and/or xylans biosynthesis in cell walls. This is Probable galacturonosyltransferase-like 6 (GATL6) from Arabidopsis thaliana (Mouse-ear cress).